A 298-amino-acid polypeptide reads, in one-letter code: ADP/ATP translocase 2 (298 aa).

Position 1 is an N-acetylmethionine (M1). The Mitochondrial intermembrane portion of the chain corresponds to 1–7; it reads MTDAAVS. N-acetylthreonine; in ADP/ATP translocase 2, N-terminally processed is present on T2. A Solcar 1 repeat occupies 6–98; that stretch reads VSFAKDFLAG…FAFKDKYKQI (93 aa). S7 carries the phosphoserine modification. The helical transmembrane segment at 8–37 threads the bilayer; the sequence is FAKDFLAGGVAAAISKTAVAPIERVKLLLQ. K23 is subject to N6-malonyllysine. Over 38 to 74 the chain is Mitochondrial matrix; it reads VQHASKQITADKQYKGIMDCVVRIPKEQGVLSFWRGN. An N6-succinyllysine modification is found at K43. N6,N6,N6-trimethyllysine; alternate is present on K52. The residue at position 52 (K52) is an N6,N6-dimethyllysine; alternate. K52 bears the N6-methyllysine; alternate mark. Residues 75–99 form a helical membrane-spanning segment; that stretch reads LANVIRYFPTQALNFAFKDKYKQIF. 2 residues coordinate ADP: R80 and K92. Residues K92 and K96 each carry the N6-malonyllysine modification. Over 100-109 the chain is Mitochondrial intermembrane; it reads LGGVDKRTQF. K105 bears the N6-acetyllysine; alternate mark. K105 is subject to N6-succinyllysine; alternate. A helical transmembrane segment spans residues 110 to 130; it reads WRYFAGNLASGGAAGATSLCF. Solcar repeat units follow at residues 111-201 and 212-297; these read RYFA…AKGM and ISWM…IKKY. Over 131-178 the chain is Mitochondrial matrix; that stretch reads VYPLDFARTRLAADVGKAGDAREFKGLGDCLVKITKSDGIRGLYQGFN. At K147 the chain carries N6-methyllysine; alternate. An N6-acetyllysine; alternate mark is found at K147 and K155. N6-succinyllysine; alternate occurs at positions 147 and 155. Residue K147 is modified to N6-malonyllysine; alternate. An N6-acetyllysine mark is found at K163 and K166. The chain crosses the membrane as a helical span at residues 179–199; it reads VSVQGIIIYRAAYFGIYDTAK. Residues 200 to 210 are Mitochondrial intermembrane-facing; it reads GMLPDPKNTHI. Residues 211–231 traverse the membrane as a helical segment; it reads FISWMIAQSVTAVAGLTSYPF. Topologically, residues 232-273 are mitochondrial matrix; that stretch reads DTVRRRMMMQSGRKGSDIMYTGTIDCWKKIARDEGSKAFFKG. Residue R235 participates in ADP binding. The important for transport activity stretch occupies residues 235-240; the sequence is RRRMMM. Positions 235–240 match the Nucleotide carrier signature motif motif; sequence RRRMMM. N6-acetyllysine; alternate is present on K268. The residue at position 268 (K268) is an N6-succinyllysine; alternate. A helical membrane pass occupies residues 274–291; that stretch reads AWSNVLRGMGGAFVLVLY. Residues 292–298 are Mitochondrial intermembrane-facing; sequence DEIKKYT.

The protein belongs to the mitochondrial carrier (TC 2.A.29) family. Monomer. Component of the MMXD complex, which includes CIAO1, ERCC2, CIAO2B, MMS19 and SLC25A5/ANT2. Interacts with AK4. Interacts with TIMM44; leading to inhibit the presequence translocase TIMM23, thereby promoting stabilization of PINK1. Post-translationally, trimethylated by ANTKMT at Lys-52.

The protein localises to the mitochondrion inner membrane. The protein resides in the membrane. It catalyses the reaction ADP(in) + ATP(out) = ADP(out) + ATP(in). The enzyme catalyses H(+)(in) = H(+)(out). With respect to regulation, the matrix-open state (m-state) is inhibited by the membrane-permeable bongkrekic acid (BKA). The cytoplasmic-open state (c-state) is inhibited by the membrane-impermeable toxic inhibitor carboxyatractyloside (CATR). Proton transporter activity is inhibited by ADP:ATP antiporter activity. In terms of biological role, ADP:ATP antiporter that mediates import of ADP into the mitochondrial matrix for ATP synthesis, and export of ATP out to fuel the cell. Cycles between the cytoplasmic-open state (c-state) and the matrix-open state (m-state): operates by the alternating access mechanism with a single substrate-binding site intermittently exposed to either the cytosolic (c-state) or matrix (m-state) side of the inner mitochondrial membrane. In addition to its ADP:ATP antiporter activity, also involved in mitochondrial uncoupling and mitochondrial permeability transition pore (mPTP) activity. Plays a role in mitochondrial uncoupling by acting as a proton transporter: proton transport uncouples the proton flows via the electron transport chain and ATP synthase to reduce the efficiency of ATP production and cause mitochondrial thermogenesis. Proton transporter activity is inhibited by ADP:ATP antiporter activity, suggesting that SLC25A5/ANT2 acts as a master regulator of mitochondrial energy output by maintaining a delicate balance between ATP production (ADP:ATP antiporter activity) and thermogenesis (proton transporter activity). Proton transporter activity requires free fatty acids as cofactor, but does not transport it. Probably mediates mitochondrial uncoupling in tissues that do not express UCP1. Also plays a key role in mPTP opening, a non-specific pore that enables free passage of the mitochondrial membranes to solutes of up to 1.5 kDa, and which contributes to cell death. It is however unclear if SLC25A5/ANT2 constitutes a pore-forming component of mPTP or regulates it. Acts as a regulator of mitophagy independently of ADP:ATP antiporter activity: promotes mitophagy via interaction with TIMM44, leading to inhibit the presequence translocase TIMM23, thereby promoting stabilization of PINK1. As part of the mitotic spindle-associated MMXD complex it may play a role in chromosome segregation. This chain is ADP/ATP translocase 2, found in Tachyglossus aculeatus aculeatus (Southeast Australian short-beaked echidna).